The primary structure comprises 141 residues: Large ribosomal subunit protein uL11 (141 aa).

The protein belongs to the universal ribosomal protein uL11 family. In terms of assembly, part of the ribosomal stalk of the 50S ribosomal subunit. Interacts with L10 and the large rRNA to form the base of the stalk. L10 forms an elongated spine to which L12 dimers bind in a sequential fashion forming a multimeric L10(L12)X complex. One or more lysine residues are methylated.

Forms part of the ribosomal stalk which helps the ribosome interact with GTP-bound translation factors. In Aliarcobacter butzleri (strain RM4018) (Arcobacter butzleri), this protein is Large ribosomal subunit protein uL11.